Reading from the N-terminus, the 206-residue chain is Dephospho-CoA kinase (206 aa).

The DPCK domain maps to 4–204 (IVGLTGGIGS…HQYLQLANAQ (201 aa)). Residue 12–17 (GSGKST) participates in ATP binding.

It belongs to the CoaE family.

The protein localises to the cytoplasm. It catalyses the reaction 3'-dephospho-CoA + ATP = ADP + CoA + H(+). It functions in the pathway cofactor biosynthesis; coenzyme A biosynthesis; CoA from (R)-pantothenate: step 5/5. Catalyzes the phosphorylation of the 3'-hydroxyl group of dephosphocoenzyme A to form coenzyme A. The sequence is that of Dephospho-CoA kinase from Pasteurella multocida (strain Pm70).